The primary structure comprises 263 residues: MAPK-interacting and spindle-stabilizing protein (263 aa).

The interval G13–T238 is disordered. 2 stretches are compositionally biased toward pro residues: residues S14 to G34 and G140 to P155. Residues S156–L165 show a composition bias toward low complexity. Positions P176–T189 are enriched in polar residues. Residues I202 to R213 are compositionally biased toward basic residues.

It belongs to the MISS family. In terms of assembly, interacts with MAPK1. Phosphorylated in vitro by MAPK1.

The protein resides in the cytoplasm. It localises to the cytoskeleton. The protein localises to the spindle. Functionally, involved in the maintenance of the spindle integrity during the cytostatic factor (CSF) arrest of oocytes. This chain is MAPK-interacting and spindle-stabilizing protein (Mapk1ip1), found in Mus musculus (Mouse).